The sequence spans 64 residues: Conotoxin VnMLCL-033 (64 aa).

Positions 1 to 19 (MLCLPVFIILLLLASPAAP) are cleaved as a signal peptide. Residues 20 to 43 (NPLQTRIQSNLIRAGPEDANIKTD) constitute a propeptide that is removed on maturation. Isoleucine 63 is modified (isoleucine amide).

The protein belongs to the conotoxin T superfamily. As to expression, expressed by the venom duct.

The protein resides in the secreted. The chain is Conotoxin VnMLCL-033 from Conus ventricosus (Mediterranean cone).